Here is a 465-residue protein sequence, read N- to C-terminus: uncharacterized protein (465 aa).

Residues 13–71 enclose the TRAM domain; sequence GPRPGLRLELQAIDLDRDGHGLARWQGWVVVVPGLLPGERAKVQLQQRQKSRWLSRISE. The [4Fe-4S] cluster site is built by C84, C90, C93, and C171. S-adenosyl-L-methionine-binding residues include Q294, Y324, E345, and D391. The active-site Nucleophile is C418.

It belongs to the class I-like SAM-binding methyltransferase superfamily. RNA M5U methyltransferase family.

This is an uncharacterized protein from Parasynechococcus marenigrum (strain WH8102).